A 300-amino-acid polypeptide reads, in one-letter code: Recombination-associated protein RdgC (300 aa).

Belongs to the RdgC family.

It is found in the cytoplasm. The protein localises to the nucleoid. May be involved in recombination. This is Recombination-associated protein RdgC from Janthinobacterium sp. (strain Marseille) (Minibacterium massiliensis).